The primary structure comprises 467 residues: MVTVRREKDSMGAIEVPADKLWGAQTQRSLEHFRISTEKMPVSLIHALALTKRAAAKVNQDLGLLAAEKASAIIQAADEVLAGKHADEFPLAIWQTGSGTQSNMNMNEVLANRASEILGGVRGMERKVHPNDDVNKSQSSNDVFPTAMHVAALLALREHLIPQLSALTDTLRDKSHAFADIVKIGRTHLQDATPLTLGQEISGWVAMLEHNLRHIEHSLPHVAELALGGTAVGTGLNTHPEYARRVAEELATITAAPFVTAPNKFEALATCDALVQAHGALKGLAASLMKIANDVRWLASGPRCGIGEIAIPENEPGSSIMPGKVNPTQCEAVTMLCCQVMGNDVAINMGGASGNFELNVYRPMVIHNFLQTVRLLADGMESFNKHCASGIEPNRERITQLLNESLMLVTALNTHIGYDKAAEIAKKAHKEGLTLKASAVALGYLSDEEFDAWVRPELMVGSMTPGR.

Substrate-binding positions include 98–100, R126, 129–132, 139–141, and T187; these read SGT, HPND, and SSN. The active-site Proton donor/acceptor is H188. S318 is a catalytic residue. Substrate contacts are provided by residues S319 and 324 to 326; that span reads KVN.

The protein belongs to the class-II fumarase/aspartase family. Fumarase subfamily. In terms of assembly, homotetramer.

The protein localises to the cytoplasm. The catalysed reaction is (S)-malate = fumarate + H2O. The protein operates within carbohydrate metabolism; tricarboxylic acid cycle; (S)-malate from fumarate: step 1/1. Involved in the TCA cycle. Catalyzes the stereospecific interconversion of fumarate to L-malate. This Salmonella typhimurium (strain LT2 / SGSC1412 / ATCC 700720) protein is Fumarate hydratase class II.